The sequence spans 310 residues: Lipoyl synthase (310 aa).

Residues Cys-51, Cys-56, Cys-62, Cys-77, Cys-81, Cys-84, and Ser-290 each coordinate [4Fe-4S] cluster. Positions Trp-63–Phe-280 constitute a Radical SAM core domain.

The protein belongs to the radical SAM superfamily. Lipoyl synthase family. Requires [4Fe-4S] cluster as cofactor.

It is found in the cytoplasm. The catalysed reaction is [[Fe-S] cluster scaffold protein carrying a second [4Fe-4S](2+) cluster] + N(6)-octanoyl-L-lysyl-[protein] + 2 oxidized [2Fe-2S]-[ferredoxin] + 2 S-adenosyl-L-methionine + 4 H(+) = [[Fe-S] cluster scaffold protein] + N(6)-[(R)-dihydrolipoyl]-L-lysyl-[protein] + 4 Fe(3+) + 2 hydrogen sulfide + 2 5'-deoxyadenosine + 2 L-methionine + 2 reduced [2Fe-2S]-[ferredoxin]. The protein operates within protein modification; protein lipoylation via endogenous pathway; protein N(6)-(lipoyl)lysine from octanoyl-[acyl-carrier-protein]: step 2/2. In terms of biological role, catalyzes the radical-mediated insertion of two sulfur atoms into the C-6 and C-8 positions of the octanoyl moiety bound to the lipoyl domains of lipoate-dependent enzymes, thereby converting the octanoylated domains into lipoylated derivatives. The protein is Lipoyl synthase of Chlamydia abortus (strain DSM 27085 / S26/3) (Chlamydophila abortus).